Reading from the N-terminus, the 133-residue chain is Ribosome-binding factor A (133 aa).

It belongs to the RbfA family. In terms of assembly, monomer. Binds 30S ribosomal subunits, but not 50S ribosomal subunits or 70S ribosomes.

It localises to the cytoplasm. In terms of biological role, one of several proteins that assist in the late maturation steps of the functional core of the 30S ribosomal subunit. Associates with free 30S ribosomal subunits (but not with 30S subunits that are part of 70S ribosomes or polysomes). Required for efficient processing of 16S rRNA. May interact with the 5'-terminal helix region of 16S rRNA. This Psychromonas ingrahamii (strain DSM 17664 / CCUG 51855 / 37) protein is Ribosome-binding factor A.